A 74-amino-acid chain; its full sequence is Defensin J1-2 (74 aa).

The first 27 residues, Met1–Ala27, serve as a signal peptide directing secretion. Cystine bridges form between Cys30-Cys74, Cys41-Cys61, Cys47-Cys68, and Cys51-Cys70.

The protein belongs to the DEFL family. Monomer. In terms of tissue distribution, expressed in flowers and in young fruits.

It is found in the secreted. Functionally, plant defense peptide with antifungal activity against F.oxysporum and B.cinerea. In Capsicum annuum (Capsicum pepper), this protein is Defensin J1-2.